The primary structure comprises 1135 residues: DNA-directed RNA polymerase subunit beta' (1135 aa).

Cys-60, Cys-62, Cys-75, and Cys-78 together coordinate Zn(2+). Residues Asp-450, Asp-452, and Asp-454 each coordinate Mg(2+). The Zn(2+) site is built by Cys-795, Cys-869, Cys-876, and Cys-879.

It belongs to the RNA polymerase beta' chain family. As to quaternary structure, the RNAP catalytic core consists of 2 alpha, 1 beta, 1 beta' and 1 omega subunit. When a sigma factor is associated with the core the holoenzyme is formed, which can initiate transcription. Mg(2+) serves as cofactor. Zn(2+) is required as a cofactor.

It catalyses the reaction RNA(n) + a ribonucleoside 5'-triphosphate = RNA(n+1) + diphosphate. Its function is as follows. DNA-dependent RNA polymerase catalyzes the transcription of DNA into RNA using the four ribonucleoside triphosphates as substrates. The protein is DNA-directed RNA polymerase subunit beta' of Clostridium tetani (strain Massachusetts / E88).